Consider the following 275-residue polypeptide: Fructose-2,6-bisphosphatase TIGAR (275 aa).

Histidine 11 serves as the catalytic Tele-phosphohistidine intermediate. Glutamate 89 serves as the catalytic Proton donor/acceptor.

This sequence belongs to the phosphoglycerate mutase family.

The protein resides in the cytoplasm. It localises to the nucleus. The protein localises to the mitochondrion. It catalyses the reaction beta-D-fructose 2,6-bisphosphate + H2O = beta-D-fructose 6-phosphate + phosphate. In terms of biological role, fructose-bisphosphatase hydrolyzing fructose-2,6-bisphosphate as well as fructose-1,6-bisphosphate. Acts as a negative regulator of glycolysis by lowering intracellular levels of fructose-2,6-bisphosphate in a p53/TP53-dependent manner, resulting in the pentose phosphate pathway (PPP) activation and NADPH production. Contributes to the generation of reduced glutathione to cause a decrease in intracellular reactive oxygen species (ROS) content, correlating with its ability to protect cells from oxidative or metabolic stress-induced cell death. May play a role in mitophagy inhibition. In Xenopus tropicalis (Western clawed frog), this protein is Fructose-2,6-bisphosphatase TIGAR.